The primary structure comprises 959 residues: Isoleucine--tRNA ligase (959 aa).

Residues 60-70 (PYANGSLHIGH) carry the 'HIGH' region motif. Glu-571 is an L-isoleucyl-5'-AMP binding site. Residues 612-616 (KMSKS) carry the 'KMSKS' region motif. Lys-615 contributes to the ATP binding site. The Zn(2+) site is built by Cys-928, Cys-931, Cys-948, and Cys-951.

This sequence belongs to the class-I aminoacyl-tRNA synthetase family. IleS type 1 subfamily. As to quaternary structure, monomer. Zn(2+) serves as cofactor.

The protein localises to the cytoplasm. It catalyses the reaction tRNA(Ile) + L-isoleucine + ATP = L-isoleucyl-tRNA(Ile) + AMP + diphosphate. In terms of biological role, catalyzes the attachment of isoleucine to tRNA(Ile). As IleRS can inadvertently accommodate and process structurally similar amino acids such as valine, to avoid such errors it has two additional distinct tRNA(Ile)-dependent editing activities. One activity is designated as 'pretransfer' editing and involves the hydrolysis of activated Val-AMP. The other activity is designated 'posttransfer' editing and involves deacylation of mischarged Val-tRNA(Ile). In Nostoc punctiforme (strain ATCC 29133 / PCC 73102), this protein is Isoleucine--tRNA ligase.